Here is a 361-residue protein sequence, read N- to C-terminus: tRNA-specific 2-thiouridylase MnmA (361 aa).

ATP contacts are provided by residues 11-18 (GMSGGVDS) and Met37. Cys106 serves as the catalytic Nucleophile. An intrachain disulfide couples Cys106 to Cys202. Gly130 lines the ATP pocket. Residues 152-154 (KDQ) are interaction with tRNA. Cys202 functions as the Cysteine persulfide intermediate in the catalytic mechanism. Residues 308-309 (RY) form an interaction with tRNA region.

It belongs to the MnmA/TRMU family.

The protein resides in the cytoplasm. The enzyme catalyses S-sulfanyl-L-cysteinyl-[protein] + uridine(34) in tRNA + AH2 + ATP = 2-thiouridine(34) in tRNA + L-cysteinyl-[protein] + A + AMP + diphosphate + H(+). Catalyzes the 2-thiolation of uridine at the wobble position (U34) of tRNA, leading to the formation of s(2)U34. This chain is tRNA-specific 2-thiouridylase MnmA, found in Clostridium botulinum (strain Eklund 17B / Type B).